The sequence spans 525 residues: Hydroxyneurosporene desaturase (525 aa).

The protein belongs to the carotenoid/retinoid oxidoreductase family.

The enzyme catalyses rhodopin + A = (3E)-3,4-didehydrorhodopin + AH2. Its pathway is carotenoid biosynthesis; spheroidene biosynthesis. Catalyzes the introduction of C-3,4 double bonds into 1-hydroxyneurosporene (1-HO-Neu) to yield demethylspheroidene (DMS). The preferred substrates are 1-hydroxy-neurosporene, 1-hydroxy-lycopene and 1,1-dihydroxyneurosporene, however the 3,4-didehydrolycopene derivatives such as 1,1-dihydroxy-3,4-didehydrolycopene, 1-methoxy-1-hydroxy-3,4-didehydrolycopene and 1-hydroxy-3,4-didehydrolycopene are also efficiently converted. 1-HO-carotene derivatives can be also used. This Rubrivivax gelatinosus (Rhodocyclus gelatinosus) protein is Hydroxyneurosporene desaturase (crtD).